We begin with the raw amino-acid sequence, 433 residues long: MRMIDIIEKKRDGHTLTTEEINFFIDGYVKGDIPDYQASSLAMAIYFQDMNDDERAALTMAMVNSGDMIDLSDIKGVKVDKHSTGGVGDTTTLVLAPLVAAVDVPVAKMSGRGLGHTGGTIDKLEAIDGFHVEIDEATFVKLVNENKVAVVGQSGNLTPADKKIYALRDVTGTVNSIPLIASSIMSKKIAAGADAIVLDVKTGSGAFMKTLEDAEALAHAMVRIGNNVGRNTMAIISDMNQPLGRAIGNALELQEAIDTLKGQGPKDLTELVLTLGSQMVVLANKAETLEEARALLIEAIDSGAALEKFKTFIKNQGGDETVIDHPERLPQAQYQIEYKAKKSGYVTELVSNDIGVASMMLGAGRLTKEDDIDLAVGIVLNKKIGDKVEEGESLLTIHSNRQDVDDVVKKLDSSITIADHVVSPTLIHKIITE.

81–83 (KHS) provides a ligand contact to phosphate. Positions 88 and 90 each coordinate K(+). Residues T92, 108–110 (KMS), and T120 each bind phosphate. Substrate is bound by residues R168 and K187. K(+) is bound by residues L243, A246, and E255.

It belongs to the thymidine/pyrimidine-nucleoside phosphorylase family. As to quaternary structure, homodimer. K(+) is required as a cofactor.

The catalysed reaction is uridine + phosphate = alpha-D-ribose 1-phosphate + uracil. The enzyme catalyses thymidine + phosphate = 2-deoxy-alpha-D-ribose 1-phosphate + thymine. It carries out the reaction 2'-deoxyuridine + phosphate = 2-deoxy-alpha-D-ribose 1-phosphate + uracil. In terms of biological role, catalyzes phosphorolysis of the pyrimidine nucleosides uridine, thymidine and 2'-deoxyuridine with the formation of the corresponding pyrimidine base and ribose-1-phosphate. This chain is Pyrimidine-nucleoside phosphorylase (pdp), found in Staphylococcus aureus (strain bovine RF122 / ET3-1).